The sequence spans 104 residues: Large ribosomal subunit protein uL24 (104 aa).

It belongs to the universal ribosomal protein uL24 family. As to quaternary structure, part of the 50S ribosomal subunit.

Its function is as follows. One of two assembly initiator proteins, it binds directly to the 5'-end of the 23S rRNA, where it nucleates assembly of the 50S subunit. In terms of biological role, one of the proteins that surrounds the polypeptide exit tunnel on the outside of the subunit. This is Large ribosomal subunit protein uL24 from Clostridium perfringens (strain SM101 / Type A).